Consider the following 516-residue polypeptide: Protein psiC (516 aa).

Positions 1-19 (MKILILSFFLILGINLVFC) are cleaved as a signal peptide. The PA14 domain occupies 109–249 (ESKDEPGIYV…YDACGVCLGK (141 aa)). Asn-134, Asn-234, Asn-250, Asn-284, Asn-333, Asn-357, and Asn-367 each carry an N-linked (GlcNAc...) asparagine glycan. The segment covering 418–427 (DIIIDSSSDI) has biased composition (low complexity). The segment at 418 to 465 (DIIIDSSSDIPIPTLSPSPQPSRFPTDTPTNTPMPPTRPPTPTEDPKI) is disordered. Positions 449-460 (TPMPPTRPPTPT) are enriched in pro residues.

The protein belongs to the prespore-cell-inducing factor family.

The protein resides in the secreted. This chain is Protein psiC (psiC), found in Dictyostelium discoideum (Social amoeba).